The following is a 61-amino-acid chain: Protein translocase subunit SecE (61 aa).

A helical transmembrane segment spans residues 39–59 (VGIIIIGLIGFILSIVSQVLF).

Belongs to the SecE/SEC61-gamma family. In terms of assembly, component of the Sec protein translocase complex. Heterotrimer consisting of SecY (alpha), SecG (beta) and SecE (gamma) subunits. The heterotrimers can form oligomers, although 1 heterotrimer is thought to be able to translocate proteins. Interacts with the ribosome. May interact with SecDF, and other proteins may be involved.

It localises to the cell membrane. Functionally, essential subunit of the Sec protein translocation channel SecYEG. Clamps together the 2 halves of SecY. May contact the channel plug during translocation. The polypeptide is Protein translocase subunit SecE (Methanosphaera stadtmanae (strain ATCC 43021 / DSM 3091 / JCM 11832 / MCB-3)).